Here is a 374-residue protein sequence, read N- to C-terminus: F-box/LRR-repeat protein 8 (374 aa).

Positions 2–48 (AEPGEGLPEEVLALIFRHLSLRDRAAAARVCRAWAAAATCSAVWHDT) constitute an F-box domain.

Directly interacts with SKP1 and CUL1.

Substrate-recognition component of the SCF (SKP1-CUL1-F-box protein)-type E3 ubiquitin ligase complex. This is F-box/LRR-repeat protein 8 (FBXL8) from Homo sapiens (Human).